The following is a 95-amino-acid chain: Co-chaperonin GroES (95 aa).

This sequence belongs to the GroES chaperonin family. Heptamer of 7 subunits arranged in a ring. Interacts with the chaperonin GroEL.

It localises to the cytoplasm. In terms of biological role, together with the chaperonin GroEL, plays an essential role in assisting protein folding. The GroEL-GroES system forms a nano-cage that allows encapsulation of the non-native substrate proteins and provides a physical environment optimized to promote and accelerate protein folding. GroES binds to the apical surface of the GroEL ring, thereby capping the opening of the GroEL channel. The protein is Co-chaperonin GroES of Rickettsia rickettsii (strain Sheila Smith).